The following is an 80-amino-acid chain: Protein FAM229B (80 aa).

The tract at residues 1 to 45 (MPFRFGTQPRRFPVEGGDSSIELESGLSSSASCNGKETSPNRQLR) is disordered. Residues 15–32 (EGGDSSIELESGLSSSAS) are compositionally biased toward low complexity. Residues 33–42 (CNGKETSPNR) show a composition bias toward polar residues.

Belongs to the FAM229 family.

The sequence is that of Protein FAM229B (Fam229b) from Rattus norvegicus (Rat).